A 480-amino-acid polypeptide reads, in one-letter code: Coronin-2B (480 aa).

WD repeat units lie at residues 85–125 (GHQG…LKRN), 135–177 (GHSR…KMID), 179–217 (HTDVILCMSFNTDGSLLTTTCKDKKLRVIEPRSGRVLQE), 220–263 (CKNH…MPMI), and 265–308 (EEID…PYLS). The stretch at 436-479 (NELLRMFFRQQDEIRRLKEELAQKDIRLRQLQLELKNLRNNPKN) forms a coiled coil.

It belongs to the WD repeat coronin family. As to quaternary structure, binds to F-actin and to vinculin.

The protein localises to the cytoplasm. It localises to the cytoskeleton. Functionally, may play a role in the reorganization of neuronal actin structure. This chain is Coronin-2B (Coro2b), found in Mus musculus (Mouse).